The primary structure comprises 307 residues: UDP-3-O-acyl-N-acetylglucosamine deacetylase (307 aa).

Residues H78, H241, and D245 each coordinate Zn(2+). Catalysis depends on H268, which acts as the Proton donor.

This sequence belongs to the LpxC family. The cofactor is Zn(2+).

The enzyme catalyses a UDP-3-O-[(3R)-3-hydroxyacyl]-N-acetyl-alpha-D-glucosamine + H2O = a UDP-3-O-[(3R)-3-hydroxyacyl]-alpha-D-glucosamine + acetate. Its pathway is glycolipid biosynthesis; lipid IV(A) biosynthesis; lipid IV(A) from (3R)-3-hydroxytetradecanoyl-[acyl-carrier-protein] and UDP-N-acetyl-alpha-D-glucosamine: step 2/6. Catalyzes the hydrolysis of UDP-3-O-myristoyl-N-acetylglucosamine to form UDP-3-O-myristoylglucosamine and acetate, the committed step in lipid A biosynthesis. This chain is UDP-3-O-acyl-N-acetylglucosamine deacetylase, found in Acidovorax ebreus (strain TPSY) (Diaphorobacter sp. (strain TPSY)).